Reading from the N-terminus, the 238-residue chain is Lipoprotein-releasing system ATP-binding protein LolD (238 aa).

The ABC transporter domain occupies 6-238 (LVCQGIRKVY…RSSLAQEMEA (233 aa)). 42-49 (GSSGSGKS) contacts ATP.

This sequence belongs to the ABC transporter superfamily. Lipoprotein translocase (TC 3.A.1.125) family. The complex is composed of two ATP-binding proteins (LolD) and two transmembrane proteins (LolC and LolE).

The protein localises to the cell inner membrane. Part of the ABC transporter complex LolCDE involved in the translocation of mature outer membrane-directed lipoproteins, from the inner membrane to the periplasmic chaperone, LolA. Responsible for the formation of the LolA-lipoprotein complex in an ATP-dependent manner. The protein is Lipoprotein-releasing system ATP-binding protein LolD of Aliivibrio fischeri (strain ATCC 700601 / ES114) (Vibrio fischeri).